We begin with the raw amino-acid sequence, 723 residues long: MDKTELCECLVQWLQTFNLNAPHKTVEDLGDGVAMSEALCQIAPDYFSESWFGKIKQDAGENWRLRMSNLKKVLTGVLDYYSEVLGQQINDFTLPDVTSIAENYDVEEMGRLLQLILGCAVNCDRKQEYIQNIMGMEEAVQHAVMNAIQELMNKEAPASPGVLPEVEKQLRDTMEELNEVRAAKEEIAQRCHELDMQVQQLMEENTLMKVEKDELSDKVNQVDGYEDTSTPAGRRYIQLTHQVEQLQEETYRLETGRDEYRLKCEEMEKEILDLAGKNEELMALAAETQLLKDEMDILRQSAEKTSKYEQTIETYKKKLEDLADLRRTVEQLQEETYRLETGLSHCELRKANTLRSQLDMYKKQVQELHGKVSEETKRADKAEFELKRSTEKLDTVQKEKQRIVNERDTLKETNEELHCMQLQQGKAMLYSTGSLAGIGSNVESPVGSPIPEVVPPEIKEKLIRLQHENKMLKLKAEGSDDERLAVSQAMLDDAQARTNELETENRLANQRILELQGQLEDMQTEQEEVGSPAKDQDSVALRKKLEEHMEKLKDADSQLQKKKEYIDNLEPKVSSSAEKIQQLQEMLNKKDDDMKAMEERYKRYLEKAKSVIRTLDPKQNQSSTPEVQALKNQLTEKERLIDHLERDHEKAKLTREQEEKLIVSAWYNMGAQLHRKAVEGRLANGGPMQGGQSFLARQRQATSRRTTVSTTHPGHARSVNFVN.

A Calponin-homology (CH) domain is found at 4 to 120 (TELCECLVQW…RLLQLILGCA (117 aa)). Coiled-coil stretches lie at residues 162 to 423 (VLPE…MQLQ) and 457 to 665 (EIKE…IVSA). A disordered region spans residues 682-723 (LANGGPMQGGQSFLARQRQATSRRTTVSTTHPGHARSVNFVN). The span at 696–711 (ARQRQATSRRTTVSTT) shows a compositional bias: low complexity.

Belongs to the hook family. In terms of assembly, interacts with microtubules.

The protein resides in the cytoplasm. Its subcellular location is the cytoskeleton. Functionally, may function to promote vesicle trafficking and/or fusion. May act to link a number of membrane-bound organelles to the cytoskeleton. The chain is Protein Hook homolog from Branchiostoma floridae (Florida lancelet).